The following is a 356-amino-acid chain: Tyrosine recombinase XerS (356 aa).

The region spanning 16-121 (IMPWYVLDYY…ALSSLYKYLT (106 aa)) is the Core-binding (CB) domain. Positions 169-354 (AFLDYVDKEY…VNDEQKNALD (186 aa)) constitute a Tyr recombinase domain. Residues Arg210, Lys234, His306, Arg309, and His332 contribute to the active site. The O-(3'-phospho-DNA)-tyrosine intermediate role is filled by Tyr341.

This sequence belongs to the 'phage' integrase family. XerS subfamily.

The protein resides in the cytoplasm. Its activity is regulated as follows. FtsK is required for recombination. Its function is as follows. Site-specific tyrosine recombinase, which acts by catalyzing the cutting and rejoining of the recombining DNA molecules. Essential to convert dimers of the bacterial chromosome into monomers to permit their segregation at cell division. This Streptococcus pyogenes serotype M49 (strain NZ131) protein is Tyrosine recombinase XerS.